The sequence spans 102 residues: Small ribosomal subunit protein uS10 (102 aa).

This sequence belongs to the universal ribosomal protein uS10 family. Part of the 30S ribosomal subunit.

Involved in the binding of tRNA to the ribosomes. This Gluconacetobacter diazotrophicus (strain ATCC 49037 / DSM 5601 / CCUG 37298 / CIP 103539 / LMG 7603 / PAl5) protein is Small ribosomal subunit protein uS10.